The chain runs to 506 residues: Anaerobic nitric oxide reductase transcription regulator NorR (506 aa).

Aspartate 57 is modified (4-aspartylphosphate). The Sigma-54 factor interaction domain maps to 187–416 (MIGLSPAMTQ…LEHAIHRAVV (230 aa)). ATP-binding positions include 215-222 (GETGTGKE) and 278-287 (ADNGTLFLDE). Positions 481 to 500 (WAASARALETDVANLHRLAK) form a DNA-binding region, H-T-H motif.

Its pathway is nitrogen metabolism; nitric oxide reduction. Required for the expression of anaerobic nitric oxide (NO) reductase, acts as a transcriptional activator for at least the norVW operon. Activation also requires sigma-54. This chain is Anaerobic nitric oxide reductase transcription regulator NorR, found in Salmonella heidelberg (strain SL476).